A 112-amino-acid polypeptide reads, in one-letter code: Cytochrome c 2.1 (112 aa).

Cys20, Cys23, His24, and Met85 together coordinate heme c.

It belongs to the cytochrome c family. In terms of processing, binds 1 heme c group covalently per subunit.

The protein resides in the mitochondrion intermembrane space. In terms of biological role, electron carrier protein. The oxidized form of the cytochrome c heme group can accept an electron from the heme group of the cytochrome c1 subunit of cytochrome reductase. Cytochrome c then transfers this electron to the cytochrome oxidase complex, the final protein carrier in the mitochondrial electron-transport chain. This chain is Cytochrome c 2.1, found in Caenorhabditis briggsae.